The following is a 298-amino-acid chain: Junctional adhesion molecule B (298 aa).

The signal sequence occupies residues 1 to 28 (MARSPQGLLMLLLLHYLIVALDYHKANG). The Extracellular segment spans residues 29–236 (FSASKDHRQE…GKRMQVDVLN (208 aa)). Positions 32 to 128 (SKDHRQEVTV…GQNLQEDKVM (97 aa)) constitute an Ig-like V-type domain. 2 disulfide bridges follow: Cys-51–Cys-110 and Cys-156–Cys-214. Asn-99 carries N-linked (GlcNAc...) asparagine glycosylation. The Ig-like C2-type domain maps to 135 to 238 (PAVPACEVPT…RMQVDVLNIS (104 aa)). A helical membrane pass occupies residues 237–257 (ISGIIATVVVVAFVISVCGLG). At 258-298 (TCYAQRKGYFSKETSFQKGSPASKVTTMSENDFKHTKSFII) the chain is on the cytoplasmic side.

The protein belongs to the immunoglobulin superfamily. In terms of processing, the expression in Sertoli cells is regulated by TGFB3 through ubiquitin-mediated proteasomal degradation. Expressed by bone marrow stromal cells (at protein level). Expressed in skin (at protein level). Expressed in testis by Sertoli cells (at protein level). Expressed by dorsal root ganglion and spinal cord neurons.

It localises to the cell membrane. The protein localises to the cell junction. Its subcellular location is the tight junction. Functionally, junctional adhesion protein that mediates heterotypic cell-cell interactions with its cognate receptor JAM3 to regulate different cellular processes. Plays a role in homing and mobilization of hematopoietic stem and progenitor cells within the bone marrow. At the surface of bone marrow stromal cells, it contributes to the retention of the hematopoietic stem and progenitor cells expressing JAM3. Plays a central role in leukocytes extravasation by facilitating not only transmigration but also tethering and rolling of leukocytes along the endothelium. Tethering and rolling of leukocytes are dependent on the binding by JAM2 of the integrin alpha-4/beta-1. Plays a role in spermatogenesis where JAM2 and JAM3, which are respectively expressed by Sertoli and germ cells, mediate an interaction between both cell types and play an essential role in the anchorage of germ cells onto Sertoli cells and the assembly of cell polarity complexes during spermatid differentiation. Also functions as an inhibitory somatodendritic cue that prevents the myelination of non-axonal parts of neurons. During myogenesis, it is involved in myocyte fusion. May also play a role in angiogenesis. The chain is Junctional adhesion molecule B from Mus musculus (Mouse).